Reading from the N-terminus, the 609-residue chain is Serine/threonine-protein phosphatase 4 regulatory subunit 2 (609 aa).

At Ser-68 the chain carries Phosphoserine. Positions 175–569 are disordered; it reads NNNGNADEGS…EEARVSPSAT (395 aa). Low complexity predominate over residues 183–194; it reads GSSPGAGSAGCA. Residues 201-225 are compositionally biased toward basic and acidic residues; sequence RSDDNDQPKAKKAKLEIDGEERSEA. Ser-223 and Ser-226 each carry phosphoserine. Basic and acidic residues predominate over residues 233–244; it reads VATRVKNEKDEK. Ser-252 carries the post-translational modification Phosphoserine. Residues 258–270 are compositionally biased toward acidic residues; the sequence is EIEEPDEEVDEAD. Composition is skewed to basic and acidic residues over residues 310 to 351 and 375 to 400; these read IEAE…KPDG and EPVK…KQDD. Over residues 401-410 the composition is skewed to acidic residues; sequence IDSTETDDAP. The segment covering 414-462 has biased composition (basic and acidic residues); that stretch reads KPAEEKIASSESKPKTKSEDDPEAETKKSQPEKTETEAAEKSVSDEKQA. Thr-602 is modified (phosphothreonine). Position 603 is a phosphoserine (Ser-603).

This sequence belongs to the PPP4R2 family. As to quaternary structure, serine/threonine-protein phosphatase 4 (PP4) occurs in different assemblies of the catalytic and one or more regulatory subunits. Probably part of a PP4 PPP4C-PPP4R2-PPP4R3 complex containing Pp4-19C, PPP4R2r and flfl.

In terms of biological role, regulatory subunit of serine/threonine-protein phosphatase 4 (PP4). The probable PP4 complex Pp4-19C-PPP4R2r-flfl (PPP4C-PPP4R2-PPP4R3) is required to prevent caspase induced cell death (in vitro). This Drosophila melanogaster (Fruit fly) protein is Serine/threonine-protein phosphatase 4 regulatory subunit 2 (PPP4R2r).